The sequence spans 90 residues: Alpha-latrotoxin associated low molecular weight protein (90 aa).

The signal sequence occupies residues Met-1 to Ala-18.

This sequence belongs to the arthropod CHH/MIH/GIH/VIH hormone family. As to expression, expressed by the venom gland.

Its subcellular location is the secreted. Functionally, may increase the toxicity of alpha-latrotoxin and/or other venom components. Is non-toxic to mice and to the cockroach Periplaneta americana. The polypeptide is Alpha-latrotoxin associated low molecular weight protein (Latrodectus geometricus (Brown widow spider)).